Here is a 41-residue protein sequence, read N- to C-terminus: Inducible serine protease inhibitor 3 (41 aa).

Functionally, inhibits trypsin and the toxin proteases PR1 and PR2 of M.anisopliae. Does not inhibit chymotrypsin, subtilisin Carlsberg, proteinase K and porcine pancreatic elastase. In Galleria mellonella (Greater wax moth), this protein is Inducible serine protease inhibitor 3.